The primary structure comprises 173 residues: Alpha-crystallin A chain (173 aa).

Met1 is subject to N-acetylmethionine. The interval Met1–Glu63 is required for complex formation with BFSP1 and BFSP2. Deamidated glutamine; partial is present on Gln6. Phosphoserine is present on Ser45. At Gln50 the chain carries Deamidated glutamine; partial. The region spanning Leu52 to Glu164 is the sHSP domain. N6-acetyllysine occurs at positions 70 and 99. Zn(2+)-binding residues include His100, Glu102, and His107. Ser122 carries the post-translational modification Phosphoserine. Deamidated asparagine; partial is present on Asn123. Basic and acidic residues predominate over residues Ile146–Pro167. The tract at residues Ile146–Ser173 is disordered. A Zn(2+)-binding site is contributed by His154. O-linked (GlcNAc) serine glycosylation is present at Ser162.

The protein belongs to the small heat shock protein (HSP20) family. In terms of assembly, heteromer composed of three CRYAA and one CRYAB subunits. Inter-subunit bridging via zinc ions enhances stability, which is crucial as there is no protein turn over in the lens. Can also form homodimers and homotetramers (dimers of dimers) which serve as the building blocks of homooligomers. Within homooligomers, the zinc-binding motif is created from residues of 3 different molecules. His-100 and Glu-102 from one molecule are ligands of the zinc ion, and His-107 and His-154 residues from additional molecules complete the site with tetrahedral coordination geometry. Part of a complex required for lens intermediate filament formation composed of BFSP1, BFSP2 and CRYAA. Post-translationally, acetylation at Lys-70 may increase chaperone activity. In terms of processing, undergoes age-dependent proteolytical cleavage at the C-terminus.

It is found in the cytoplasm. Its subcellular location is the nucleus. Contributes to the transparency and refractive index of the lens. Acts as a chaperone, preventing aggregation of various proteins under a wide range of stress conditions. Required for the correct formation of lens intermediate filaments as part of a complex composed of BFSP1, BFSP2 and CRYAA. This Osphranter rufus (Red kangaroo) protein is Alpha-crystallin A chain (CRYAA).